We begin with the raw amino-acid sequence, 508 residues long: Probable zinc metalloprotease MCYG_04217 (508 aa).

Asn-111 carries an N-linked (GlcNAc...) asparagine glycan. His-182, Asp-202, and Glu-238 together coordinate Zn(2+). N-linked (GlcNAc...) asparagine glycosylation is present at Asn-253. Asp-265 provides a ligand contact to Zn(2+). The 87-residue stretch at Met-422–Pro-508 folds into the Fibronectin type-III domain. N-linked (GlcNAc...) asparagine glycosylation is present at Asn-435.

The protein belongs to the peptidase M28 family. M28B subfamily. Requires Zn(2+) as cofactor.

It is found in the secreted. This is Probable zinc metalloprotease MCYG_04217 from Arthroderma otae (strain ATCC MYA-4605 / CBS 113480) (Microsporum canis).